A 476-amino-acid polypeptide reads, in one-letter code: MDDLRDTLMAYGCIAIRAGDFNGLNDFLEQECGTRLHVAWPERCFIQLRSRSALGPFVGKMGTVCSQGAYVCCQEYLHPFGFVEGPGFMRYQLIVLIGQRGGIYCYDDLRDCIYELAPTMKDFLRHGFRHCDHFHTMRDYQRPMVQYDDYWNAVMLYRGDVESLSAEVTKRGYASYSIDDPFDECPDTHFAFWTHNTEVMKFKETSFSVVRAGGSIQTMELMIRTVPRITCYHQLLGALGHEVPERKEFLVRQYVLVDTFGVVYGYDPAMDAVYRLAEDVVMFTCVMGKKGHRNHRFSGRREAIVRLEKTPTCQHPKKTPDPMIMFDEDDDDELSLPRNVMTHEEAESRLYDAITENLMHCVKLVTTDSPLATHLWPQELQALCDSPALSLCTDDVEGVRQKLRARTGSLHHFELSYRFHDEDPETYMGFLWDIPSCDRCVRRRRFKVCDVGRRHIIPGAANGMPPLTPPHAYMNN.

Belongs to the herpesviridae US22 family. In terms of assembly, interacts with host pro-caspase-8/CASP8; this interaction inhibits CASP8 activation.

Plays a role in the inhibition of apoptosis by interacting with the pro-domain of pro-caspase-8/CASP8 and thus preventing its activation. In Human cytomegalovirus (strain Merlin) (HHV-5), this protein is Viral inhibitor of caspase-8-induced apoptosis (UL36).